The chain runs to 450 residues: MKKKNIYSIRKLGVGIASVTLGTLLISGGVTPAANAAQHDEAQQNAFYQVLNMPNLNADQRNGFIQSLKDDPSQSANVLGEAQKLNDSQAPKADAQQNNFNKDQQSAFYEILNMPNLNEAQRNGFIQSLKDDPSQSTNVLGEAKKLNESQAPKADNNFNKEQQNAFYEILNMPNLNEEQRNGFIQSLKDDPSQSANLLSEAKKLNESQAPKADNKFNKEQQNAFYEILHLPNLNEEQRNGFIQSLKDDPSVSKEILAEAKKLNDAQAPKEEDNKKPGKEDGNKPGKEDGNKPGKEDNKKPGKEDGNKPGKEDNNKPGKEDGNKPGKEDNNKPGKEDGNKPGKEDGNKPGKEDGNGVHVVKPGDTVNDIAKANGTTADKIAADNKLADKNMIKPGQELVVDKKQPANHADANKAQALPETGEENPFIGTTVFGGLSLALGAALLAGRRREL.

Residues 1–36 (MKKKNIYSIRKLGVGIASVTLGTLLISGGVTPAANA) form the signal peptide. The YSIRK-G/S signaling motif signature appears at 7–18 (YSIRKLGVGIAS). Residues 37 to 92 (AQHDEAQQNAFYQVLNMPNLNADQRNGFIQSLKDDPSQSANVLGEAQKLNDSQAPK) form an Immunoglobulin-binding region E repeat. An Immunoglobulin-binding region D repeat occupies 93–153 (ADAQQNNFNK…KKLNESQAPK (61 aa)). The Immunoglobulin-binding region A repeat unit spans residues 154-211 (ADNNFNKEQQNAFYEILNMPNLNEEQRNGFIQSLKDDPSQSANLLSEAKKLNESQAPK). One copy of the Immunoglobulin-binding region B/C repeat lies at 212–269 (ADNKFNKEQQNAFYEILHLPNLNEEQRNGFIQSLKDDPSVSKEILAEAKKLNDAQAPK). The span at 260 to 354 (KKLNDAQAPK…GNKPGKEDGN (95 aa)) shows a compositional bias: basic and acidic residues. 2 disordered regions span residues 260 to 365 (KKLN…GDTV) and 401 to 421 (KKQP…ETGE). Tandem repeats lie at residues 268–275 (PKEEDNKK), 276–283 (PGKEDGNK), 284–291 (PGKEDGNK), 292–299 (PGKEDNKK), 300–307 (PGKEDGNK), 308–315 (PGKEDNNK), 316–323 (PGKEDGNK), 324–331 (PGKEDNNK), 332–339 (PGKEDGNK), 340–347 (PGKEDGNK), and 348–355 (PGKEDGNG). Residues 268–355 (PKEEDNKKPG…NKPGKEDGNG (88 aa)) form a 12 X 8 AA approximate tandem repeats region. In terms of domain architecture, LysM spans 355 to 399 (GVHVVKPGDTVNDIAKANGTTADKIAADNKLADKNMIKPGQELVV). The short motif at 416 to 420 (LPETG) is the LPXTG sorting signal element. Thr419 carries the pentaglycyl murein peptidoglycan amidated threonine modification. A propeptide spans 420–450 (GEENPFIGTTVFGGLSLALGAALLAGRRREL) (removed by sortase).

It belongs to the immunoglobulin-binding protein SpA family. Interacts with host TNFRSF1A; this interaction leads to the stimulation of both surface expression and shedding of TNFRSF1A.

The protein resides in the secreted. It localises to the cell wall. Plays a role in the inhibition of the host innate and adaptive immune responses. Possesses five immunoglobulin-binding domains that capture both the fragment crystallizable region (Fc region) and the Fab region (part of Ig that identifies antigen) of immunoglobulins. In turn, Staphylococcus aureus is protected from phagocytic killing via inhibition of Ig Fc region. In addition, the host elicited B-cell response is prevented due to a decrease of antibody-secreting cell proliferation that enter the bone marrow, thereby decreasing long-term antibody production. Inhibits osteogenesis by preventing osteoblast proliferation and expression of alkaline phosphatase, type I collagen, osteopontin and osteocalcin. Acts directly as a pro-inflammatory factor in the lung through its ability to bind and activate tumor necrosis factor alpha receptor 1/TNFRSF1A. The protein is Immunoglobulin G-binding protein A (spa) of Staphylococcus aureus (strain Mu50 / ATCC 700699).